We begin with the raw amino-acid sequence, 2210 residues long: RNA-directed RNA polymerase L (2210 aa).

Residues 26 to 284 (RDIFLSQHHP…SHKDSDVPSC (259 aa)) are endonuclease. Residues Glu-51, Asp-89, and Glu-102 each coordinate Mn(2+). Residue Lys-115 is part of the active site. Residues 1171-1368 (CDMKMAVNNG…FLSSKLNKFI (198 aa)) form the RdRp catalytic domain. Asp-1329 is a Mg(2+) binding site.

Belongs to the Bunyavirales RNA polymerase family. Homomultimer; the oligomeric structure is essential for the polymerase activity. Interacts with nucleoprotein N. Interacts with protein Z; this interaction inhibits viral transcription and replication, Z partially blocks the product exit tunnel for the releasing nascent RNA product. Mn(2+) is required as a cofactor. The cofactor is Mg(2+).

The protein localises to the virion. It localises to the host cytoplasm. It carries out the reaction RNA(n) + a ribonucleoside 5'-triphosphate = RNA(n+1) + diphosphate. RNA-dependent RNA polymerase, which is responsible for the replication and transcription of the viral RNA genome using antigenomic RNA as an intermediate. During transcription, synthesizes subgenomic RNAs and assures their capping by a cap-snatching mechanism, which involves the endonuclease activity cleaving the host capped pre-mRNAs. These short capped RNAs are then used as primers for viral transcription. The 3'-end of subgenomic mRNAs molecules are heterogeneous and not polyadenylated. The replicase function is to direct synthesis of antigenomic and genomic RNA which are encapsidated and non capped. As a consequence of the use of the same enzyme for both transcription and replication, these mechanisms need to be well coordinated. These processes may be regulated by proteins N and Z in a dose-dependent manner. Z protein inhibits the viral polymerase L und thus the viral transcription and RNA synthesis. The protein is RNA-directed RNA polymerase L of Junin mammarenavirus (JUNV).